We begin with the raw amino-acid sequence, 721 residues long: MTPIQKTATVGGKDILLETGKVAKQAHGSVWVRLGDSIVLVTAVSAAEKKEGIDFFPLTVDYQEKLFAAGRVPGSFFRREGRPTEKETLTSRLVDRSCRPLFAEGYSNETQVIATVISFDQENDTDVLALTGASAALHISDIPFGGPIAGVRVARVGGQLVANPTLAQRAEADLDVVMAASRDAIVMVEGGAQEVSEAVMIEALLFGQAAVQPLLDAQDALRAATGNKARRSFDPPKNDVELRAKVKALTWEKVKEAYGRNEKHDRYGRLSEIKKELLQALKDEAAGDAAKLATIALREKEIKGYYEDVKYDYMRKMITDERRRIGGRGMADIRKITCEVGLLPRVHGSSLFTRGETQALVATTLGTAEDEQRVEMLTGMVFKKFMLHYNFPPFSVGEVKFLRSPGRREIGHGALAERALRAVMPPEDQFPYTVRVVSDIMESNGSSSMASVCGGCLSLMDAGVPIKAPVAGIAMGLIKEGEKIAILSDILGDEDHLGDMDFKVCGTAAGITSIQMDIKIGGVTRDILEQALAQAAEGRKHILGEMAKALSAPRGSISAYAPRITTIKIRPERIKDIIGPGGKTIKDITARTGTSINIEDDGSVSIASPNQDKVEEAIKMIRGLTQEAEVGRIYLGTVRKIAEFGAFVEIFPGTDGLIHISELSDKRVKSVSDVLSEGEEVMVKVISVDRSGKIRLSRKEALADSAKKSEGTEPPKGEPAK.

2 residues coordinate Mg(2+): D495 and D501. The region spanning P562–I621 is the KH domain. An S1 motif domain is found at G631–K699. The disordered stretch occupies residues K699–K721.

It belongs to the polyribonucleotide nucleotidyltransferase family. Mg(2+) is required as a cofactor.

The protein localises to the cytoplasm. It catalyses the reaction RNA(n+1) + phosphate = RNA(n) + a ribonucleoside 5'-diphosphate. In terms of biological role, involved in mRNA degradation. Catalyzes the phosphorolysis of single-stranded polyribonucleotides processively in the 3'- to 5'-direction. In Anaeromyxobacter sp. (strain K), this protein is Polyribonucleotide nucleotidyltransferase.